A 396-amino-acid polypeptide reads, in one-letter code: Cytochrome b (396 aa).

A run of 4 helical transmembrane segments spans residues phenylalanine 37 to methionine 57, tryptophan 81 to isoleucine 102, tryptophan 117 to leucine 137, and phenylalanine 182 to methionine 202. The heme b site is built by histidine 87 and histidine 101. Histidine 186 and histidine 200 together coordinate heme b. An a ubiquinone-binding site is contributed by histidine 205. Helical transmembrane passes span phenylalanine 230 to alanine 250, leucine 292 to histidine 312, leucine 324 to glycine 344, and phenylalanine 351 to proline 371.

The protein belongs to the cytochrome b family. As to quaternary structure, the cytochrome bc1 complex contains 3 respiratory subunits (MT-CYB, CYC1 and UQCRFS1), 2 core proteins (UQCRC1 and UQCRC2) and probably 6 low-molecular weight proteins. The cofactor is heme b.

The protein resides in the mitochondrion inner membrane. Its function is as follows. Component of the ubiquinol-cytochrome c reductase complex (complex III or cytochrome b-c1 complex) that is part of the mitochondrial respiratory chain. The b-c1 complex mediates electron transfer from ubiquinol to cytochrome c. Contributes to the generation of a proton gradient across the mitochondrial membrane that is then used for ATP synthesis. In Petromyzon marinus (Sea lamprey), this protein is Cytochrome b (mt-cyb).